Here is a 245-residue protein sequence, read N- to C-terminus: Thiopurine S-methyltransferase (245 aa).

W29–F40 is an S-adenosyl-L-methionine binding site. F40 contacts substrate. The residue at position 58 (K58) is an N6-acetyllysine. L69, E90, and R152 together coordinate S-adenosyl-L-methionine.

The protein belongs to the class I-like SAM-binding methyltransferase superfamily. TPMT family. Monomer.

The protein localises to the cytoplasm. It carries out the reaction S-adenosyl-L-methionine + a thiopurine = S-adenosyl-L-homocysteine + a thiopurine S-methylether.. This is Thiopurine S-methyltransferase (TPMT) from Felis catus (Cat).